Consider the following 222-residue polypeptide: Adenylate kinase (222 aa).

Position 2 (S2) is a propeptide, removed in mature form. N-acetylserine is present on residues S2 and S3. Residue 16-21 participates in ATP binding; sequence GAGKGT. The interval 36–65 is NMP; that stretch reads ATGDMLRSQIAKGTQLGLEAKKIMDQGGLV. AMP contacts are provided by residues T37, R42, 63–65, 92–95, and Q99; these read GLV and GFPR. Residues 133–170 are LID; sequence GRLIHPASGRSYHKIFNPPKEDMKDDVTGEALVQRSDD. Residues R134 and 143 to 144 contribute to the ATP site; that span reads SY. Positions 167 and 178 each coordinate AMP. An ATP-binding site is contributed by Q206.

It belongs to the adenylate kinase family. AK2 subfamily. Monomer.

The protein resides in the cytoplasm. The protein localises to the cytosol. It is found in the mitochondrion intermembrane space. The catalysed reaction is AMP + ATP = 2 ADP. In terms of biological role, catalyzes the reversible transfer of the terminal phosphate group between ATP and AMP. Plays an important role in cellular energy homeostasis and in adenine nucleotide metabolism. Adenylate kinase activity is critical for regulation of the phosphate utilization and the AMP de novo biosynthesis pathways. The sequence is that of Adenylate kinase from Saccharomyces cerevisiae (strain RM11-1a) (Baker's yeast).